Reading from the N-terminus, the 365-residue chain is UDP-N-acetylglucosamine--N-acetylmuramyl-(pentapeptide) pyrophosphoryl-undecaprenol N-acetylglucosamine transferase (365 aa).

UDP-N-acetyl-alpha-D-glucosamine-binding positions include 10–12, asparagine 128, arginine 170, serine 199, isoleucine 250, and glutamine 295; that span reads TGG.

The protein belongs to the glycosyltransferase 28 family. MurG subfamily.

Its subcellular location is the cell inner membrane. It catalyses the reaction di-trans,octa-cis-undecaprenyl diphospho-N-acetyl-alpha-D-muramoyl-L-alanyl-D-glutamyl-meso-2,6-diaminopimeloyl-D-alanyl-D-alanine + UDP-N-acetyl-alpha-D-glucosamine = di-trans,octa-cis-undecaprenyl diphospho-[N-acetyl-alpha-D-glucosaminyl-(1-&gt;4)]-N-acetyl-alpha-D-muramoyl-L-alanyl-D-glutamyl-meso-2,6-diaminopimeloyl-D-alanyl-D-alanine + UDP + H(+). It functions in the pathway cell wall biogenesis; peptidoglycan biosynthesis. Its function is as follows. Cell wall formation. Catalyzes the transfer of a GlcNAc subunit on undecaprenyl-pyrophosphoryl-MurNAc-pentapeptide (lipid intermediate I) to form undecaprenyl-pyrophosphoryl-MurNAc-(pentapeptide)GlcNAc (lipid intermediate II). The polypeptide is UDP-N-acetylglucosamine--N-acetylmuramyl-(pentapeptide) pyrophosphoryl-undecaprenol N-acetylglucosamine transferase (Chlorobium luteolum (strain DSM 273 / BCRC 81028 / 2530) (Pelodictyon luteolum)).